The sequence spans 1088 residues: Adenylate-forming reductase Nps10 (1088 aa).

The tract at residues 1–22 is disordered; sequence MSSVSIQIPLPTPPPTQAHNSQ. The interval 38 to 451 is adenylation (A) domain; that stretch reads FDWHSKNSPN…KIFGRTDDQI (414 aa). AMP is bound by residues His-261, 357 to 358, Thr-362, and 443 to 446; these read NL and IFGR. A Carrier domain is found at 586–668; sequence AWDSAKTLGF…SLASFVSSVA (83 aa). Ser-621 carries the O-(pantetheine 4'-phosphoryl)serine modification. The reductase (R) domain stretch occupies residues 712 to 951; sequence LTGSTGALGS…IPVNVAAAAI (240 aa). NADP(+)-binding positions include 716–719, 804–806, Tyr-875, and Lys-879; these read TGAL and NAW.

Belongs to the adenylate-forming reductase family.

Its function is as follows. Adenylate-forming reductase, a natural product biosynthesis enzyme that resembles non-ribosomal peptide synthetases, yet serves to modify one substrate, rather than to condense two or more building blocks. The A-domain preferentially accepts phenylpyruvic acid and benzoic acid as substrate. The natural product of the enzyme is not yet known. This is Adenylate-forming reductase Nps10 from Heterobasidion annosum (Root rot fungus).